The sequence spans 469 residues: GTPase Der (469 aa).

EngA-type G domains follow at residues 30-193 (PVLA…PEVA) and 203-376 (RRVA…ASWD). GTP is bound by residues 36–43 (GRPNVGKS), 83–87 (DTGGW), 145–148 (NKVD), 209–216 (GKPNVGKS), 256–260 (DTAGL), and 321–324 (NKWD). In terms of domain architecture, KH-like spans 377-459 (TRIPTGPLNS…PIRINVRVRE (83 aa)).

This sequence belongs to the TRAFAC class TrmE-Era-EngA-EngB-Septin-like GTPase superfamily. EngA (Der) GTPase family. As to quaternary structure, associates with the 50S ribosomal subunit.

Functionally, GTPase that plays an essential role in the late steps of ribosome biogenesis. The sequence is that of GTPase Der from Mycobacterium marinum (strain ATCC BAA-535 / M).